The chain runs to 307 residues: Ribosomal RNA small subunit methyltransferase H (307 aa).

S-adenosyl-L-methionine contacts are provided by residues 32 to 34, aspartate 52, phenylalanine 78, aspartate 99, and glutamine 106; that span reads GGH.

The protein belongs to the methyltransferase superfamily. RsmH family.

The protein resides in the cytoplasm. The enzyme catalyses cytidine(1402) in 16S rRNA + S-adenosyl-L-methionine = N(4)-methylcytidine(1402) in 16S rRNA + S-adenosyl-L-homocysteine + H(+). Specifically methylates the N4 position of cytidine in position 1402 (C1402) of 16S rRNA. This is Ribosomal RNA small subunit methyltransferase H from Acinetobacter baumannii (strain AB307-0294).